Here is a 125-residue protein sequence, read N- to C-terminus: Small ribosomal subunit protein uS12 (125 aa).

3-methylthioaspartic acid is present on Asp89.

The protein belongs to the universal ribosomal protein uS12 family. In terms of assembly, part of the 30S ribosomal subunit. Contacts proteins S8 and S17. May interact with IF1 in the 30S initiation complex.

In terms of biological role, with S4 and S5 plays an important role in translational accuracy. Interacts with and stabilizes bases of the 16S rRNA that are involved in tRNA selection in the A site and with the mRNA backbone. Located at the interface of the 30S and 50S subunits, it traverses the body of the 30S subunit contacting proteins on the other side and probably holding the rRNA structure together. The combined cluster of proteins S8, S12 and S17 appears to hold together the shoulder and platform of the 30S subunit. The chain is Small ribosomal subunit protein uS12 from Bordetella avium (strain 197N).